The primary structure comprises 190 residues: Holliday junction branch migration complex subunit RuvA (190 aa).

The domain I stretch occupies residues 1–64 (MIGKLSGTLD…EDAQILYGFA (64 aa)). The segment at 65–137 (TSQERAAFRE…LKGKLGPDIG (73 aa)) is domain II. Positions 137-141 (GVAAS) are flexible linker. The segment at 142–190 (VANDSQADILQALLALGYSDKEAAAALKALPSDVGVSEGIRLALRALGK) is domain III.

Belongs to the RuvA family. In terms of assembly, homotetramer. Forms an RuvA(8)-RuvB(12)-Holliday junction (HJ) complex. HJ DNA is sandwiched between 2 RuvA tetramers; dsDNA enters through RuvA and exits via RuvB. An RuvB hexamer assembles on each DNA strand where it exits the tetramer. Each RuvB hexamer is contacted by two RuvA subunits (via domain III) on 2 adjacent RuvB subunits; this complex drives branch migration. In the full resolvosome a probable DNA-RuvA(4)-RuvB(12)-RuvC(2) complex forms which resolves the HJ.

It localises to the cytoplasm. Functionally, the RuvA-RuvB-RuvC complex processes Holliday junction (HJ) DNA during genetic recombination and DNA repair, while the RuvA-RuvB complex plays an important role in the rescue of blocked DNA replication forks via replication fork reversal (RFR). RuvA specifically binds to HJ cruciform DNA, conferring on it an open structure. The RuvB hexamer acts as an ATP-dependent pump, pulling dsDNA into and through the RuvAB complex. HJ branch migration allows RuvC to scan DNA until it finds its consensus sequence, where it cleaves and resolves the cruciform DNA. The protein is Holliday junction branch migration complex subunit RuvA of Albidiferax ferrireducens (strain ATCC BAA-621 / DSM 15236 / T118) (Rhodoferax ferrireducens).